The chain runs to 111 residues: Ig kappa chain V-III region MOPC 70 (111 aa).

Residues Asp-1–Cys-23 form a framework-1 region. Cys-23 and Cys-92 form a disulfide bridge. A complementarity-determining-1 region spans residues Arg-24 to Asn-38. The segment at Trp-39–Tyr-53 is framework-2. Positions Ala-54–Ser-60 are complementarity-determining-2. The interval Gly-61 to Cys-92 is framework-3. The interval Gln-93–Thr-101 is complementarity-determining-3. Residues Phe-102–Lys-111 form a framework-4 region.

In Mus musculus (Mouse), this protein is Ig kappa chain V-III region MOPC 70.